A 175-amino-acid polypeptide reads, in one-letter code: Replication restart protein PriC (175 aa).

It belongs to the PriC family. As to quaternary structure, monomer. Oligomerizes in the absence of DNA. Component of the replication restart primosome, which is composed of PriA, PriB, PriC, DnaB and DnaT; DnaG primase associates transiently with this complex. Interacts with the C-terminus of SSB; this interaction is required for DnaB loading onto substrate replication forks. Interacts with DnaB alone and in the DnaB-DnaC complex, probably 1:1 binding with DnaB.

In terms of biological role, involved in the restart of stalled replication forks, which reloads the replicative helicase (DnaB) on sites other than the origin of replication. Recognizes abandoned replication forks and remodels DNA single-stranded binding protein (SSB) on ssDNA to uncover a loading site for DnaB. There are several restart pathways, the PriA-PriC pathway is a minor restart pathway. Also part of the minor PriC-Rep pathway for restart of stalled replication forks, which has a different substrate specificity than PriA. priB and priC have redundant roles in the cell. Stimulates the 3'-5' helicase activity of Rep helicase in vitro. In vitro can load the DnaB replicative helicase from a DnaB-DnaC complex on an SSB-coated stalled replication fork with no leading- or lagging-strand (or with a gap between the leading strand and fork junction) in the absence of other primosome proteins (PriA, PriB or DnaT). Also part of the major restart pathway with PriA, PriB, DnaB, DnaT and DnaG primase. PriC may contribute to the stability of the preprimosome complex. Preferentially binds approximately 7-9 nucleotides of single-stranded (ss)DNA, also binds double-stranded (ds)DNA. PriB is probably more important in the cell than PriC. The chain is Replication restart protein PriC from Escherichia coli (strain K12).